A 211-amino-acid chain; its full sequence is Fucoxanthin-chlorophyll a-c binding protein F, chloroplastic (211 aa).

The N-terminal 33 residues, 1-33 (AIACAAAPGLRGPSAFNGAALSTPAKSSSAMKM), are a transit peptide targeting the chloroplast. 3 consecutive transmembrane segments (helical) span residues 75-95 (IAML…PGML), 116-136 (IPPG…LAVM), and 177-197 (GRAA…SNQP).

This sequence belongs to the fucoxanthin chlorophyll protein family. The LHC complex of chromophytic algae is composed of fucoxanthin, chlorophyll A and C bound non-covalently by fucoxanthin chlorophyll proteins (FCPs). The ratio of pigments in this LHC is; fucoxanthin: chlorophyll C: chlorophyll A; (0.6-1): (0.1-0.3): (1).

It localises to the plastid. The protein localises to the chloroplast thylakoid membrane. Functionally, the light-harvesting complex (LHC) functions as a light receptor, it captures and delivers excitation energy to photosystems with which it is closely associated. Energy is transferred from the carotenoid and chlorophyll C (or B) to chlorophyll A and the photosynthetic reaction centers where it is used to synthesize ATP and reducing power. This chain is Fucoxanthin-chlorophyll a-c binding protein F, chloroplastic (FCPF), found in Macrocystis pyrifera (Giant kelp).